Here is a 366-residue protein sequence, read N- to C-terminus: Probable quinol oxidase subunit 2 (366 aa).

Residues 1–19 form the signal peptide; that stretch reads MSKFKSLLLLFGTLILLSG. Cys20 is lipidated: N-palmitoyl cysteine. Residue Cys20 is the site of S-diacylglycerol cysteine attachment. 2 consecutive transmembrane segments (helical) span residues 38 to 58 and 80 to 100; these read FLIL…LGMF and AIIE…LAIP. The tract at residues 330–366 is disordered; the sequence is EPYNNEFKKDESKNAKEMKKISKDAQDQDNDDHGGGH. Residues 335-366 show a composition bias toward basic and acidic residues; the sequence is EFKKDESKNAKEMKKISKDAQDQDNDDHGGGH.

Belongs to the cytochrome c oxidase subunit 2 family.

The protein resides in the cell membrane. The catalysed reaction is 2 a quinol + O2 = 2 a quinone + 2 H2O. Functionally, catalyzes quinol oxidation with the concomitant reduction of oxygen to water. Subunit II transfers the electrons from a quinol to the binuclear center of the catalytic subunit I. This chain is Probable quinol oxidase subunit 2 (qoxA), found in Staphylococcus aureus (strain bovine RF122 / ET3-1).